The sequence spans 126 residues: Large ribosomal subunit protein bL12 (126 aa).

This sequence belongs to the bacterial ribosomal protein bL12 family. In terms of assembly, homodimer. Part of the ribosomal stalk of the 50S ribosomal subunit. Forms a multimeric L10(L12)X complex, where L10 forms an elongated spine to which 2 to 4 L12 dimers bind in a sequential fashion. Binds GTP-bound translation factors.

In terms of biological role, forms part of the ribosomal stalk which helps the ribosome interact with GTP-bound translation factors. Is thus essential for accurate translation. The protein is Large ribosomal subunit protein bL12 of Bordetella avium (strain 197N).